The chain runs to 257 residues: 5-oxoprolinase subunit A (257 aa).

It belongs to the LamB/PxpA family. In terms of assembly, forms a complex composed of PxpA, PxpB and PxpC.

It carries out the reaction 5-oxo-L-proline + ATP + 2 H2O = L-glutamate + ADP + phosphate + H(+). Functionally, catalyzes the cleavage of 5-oxoproline to form L-glutamate coupled to the hydrolysis of ATP to ADP and inorganic phosphate. The polypeptide is 5-oxoprolinase subunit A (Pectobacterium atrosepticum (strain SCRI 1043 / ATCC BAA-672) (Erwinia carotovora subsp. atroseptica)).